We begin with the raw amino-acid sequence, 467 residues long: Neutrophil collagenase (467 aa).

An N-terminal signal peptide occupies residues methionine 1–alanine 20. The propeptide at phenylalanine 21–methionine 100 is activation peptide. 2 N-linked (GlcNAc...) asparagine glycosylation sites follow: asparagine 54 and asparagine 73. A Cysteine switch motif is present at residues proline 89–serine 96. Cysteine 91 is a binding site for Zn(2+). An N-linked (GlcNAc...) asparagine glycan is attached at asparagine 112. Aspartate 157 lines the Ca(2+) pocket. Zn(2+) contacts are provided by histidine 167 and aspartate 169. Aspartate 174, glycine 175, asparagine 177, and isoleucine 179 together coordinate Ca(2+). Zn(2+) is bound at residue histidine 182. Ca(2+) contacts are provided by glycine 189, glycine 191, and aspartate 193. Histidine 195 is a binding site for Zn(2+). Ca(2+) contacts are provided by aspartate 197 and glutamate 200. Residue asparagine 204 is glycosylated (N-linked (GlcNAc...) asparagine). Histidine 217 contributes to the Zn(2+) binding site. The active site involves glutamate 218. Histidine 221 and histidine 227 together coordinate Zn(2+). An N-linked (GlcNAc...) asparagine glycan is attached at asparagine 246. Hemopexin repeat units lie at residues proline 276–leucine 325, proline 326–serine 372, valine 374–isoleucine 420, and glutamate 421–cysteine 464. Residues cysteine 279 and cysteine 464 are joined by a disulfide bond. Aspartate 286 provides a ligand contact to Ca(2+). Ca(2+) is bound by residues aspartate 378 and aspartate 425.

Belongs to the peptidase M10A family. Requires Ca(2+) as cofactor. Zn(2+) serves as cofactor. As to expression, neutrophils.

The protein localises to the cytoplasmic granule. The protein resides in the secreted. It is found in the extracellular space. It localises to the extracellular matrix. The enzyme catalyses Cleavage of interstitial collagens in the triple helical domain. Unlike EC 3.4.24.7, this enzyme cleaves type III collagen more slowly than type I.. With respect to regulation, cannot be activated without removal of the activation peptide. In terms of biological role, can degrade fibrillar type I, II, and III collagens. This chain is Neutrophil collagenase (MMP8), found in Homo sapiens (Human).